Consider the following 313-residue polypeptide: Malate dehydrogenase (313 aa).

NAD(+) is bound at residue 11 to 16; sequence GAGHTG. Substrate-binding residues include R86 and R92. Residues N99 and 122-124 each bind NAD(+); that span reads LTN. Substrate-binding residues include N124 and R155. H179 (proton acceptor) is an active-site residue.

The protein belongs to the LDH/MDH superfamily. MDH type 3 family.

It catalyses the reaction (S)-malate + NAD(+) = oxaloacetate + NADH + H(+). Its function is as follows. Catalyzes the reversible oxidation of malate to oxaloacetate. In Staphylococcus epidermidis (strain ATCC 35984 / DSM 28319 / BCRC 17069 / CCUG 31568 / BM 3577 / RP62A), this protein is Malate dehydrogenase.